The following is a 176-amino-acid chain: MSNYRRDFTKGGLYFFTIVLQDRTKSYLTDYINEFRSAYKQTCEHYPFETVAICILPDHIHLLMQLPENDDNYAIRIAYLKTQFTRQLPKECRQFNKNRQKYRESGIWQRRFWEHLIRDDKDLANHLDYIYYNPVKHGYVEVVKDWPYSSFHRDVKAEIYPEDWGGNPDLKIKGDI.

2 residues coordinate Mg(2+): H59 and H61. The active-site Nucleophile is Y148.

The protein belongs to the transposase 17 family. RAYT subfamily. As to quaternary structure, homodimer. It depends on Mg(2+) as a cofactor.

In terms of biological role, transposase responsible for transposition an insertion sequence (IS) element. Transposition occurs in 2 main steps, excision from the donor DNA 'top strand' into a single strand circle and its subsequent reinsertion into the DNA target. This increases the copy number of the IS. The chain is Putative REP-associated tyrosine transposase from Haemophilus influenzae (strain ATCC 51907 / DSM 11121 / KW20 / Rd).